The following is a 319-amino-acid chain: Putative protein phosphatase 2C 23 (319 aa).

The PPM-type phosphatase domain maps to 73–314 (AVRMESASCY…DDITVVVACI (242 aa)). Mn(2+) contacts are provided by Gly102, Asp235, and Asp305.

The protein belongs to the PP2C family. Mg(2+) serves as cofactor.

It carries out the reaction O-phospho-L-seryl-[protein] + H2O = L-seryl-[protein] + phosphate. The catalysed reaction is O-phospho-L-threonyl-[protein] + H2O = L-threonyl-[protein] + phosphate. The sequence is that of Putative protein phosphatase 2C 23 from Oryza sativa subsp. japonica (Rice).